Consider the following 286-residue polypeptide: Phosphatidylserine decarboxylase proenzyme (286 aa).

Residues D90, H147, and S252 each act as charge relay system; for autoendoproteolytic cleavage activity in the active site. S252 acts as the Schiff-base intermediate with substrate; via pyruvic acid; for decarboxylase activity in catalysis. A Pyruvic acid (Ser); by autocatalysis modification is found at S252.

Belongs to the phosphatidylserine decarboxylase family. PSD-B subfamily. Prokaryotic type I sub-subfamily. In terms of assembly, heterodimer of a large membrane-associated beta subunit and a small pyruvoyl-containing alpha subunit. Pyruvate serves as cofactor. In terms of processing, is synthesized initially as an inactive proenzyme. Formation of the active enzyme involves a self-maturation process in which the active site pyruvoyl group is generated from an internal serine residue via an autocatalytic post-translational modification. Two non-identical subunits are generated from the proenzyme in this reaction, and the pyruvate is formed at the N-terminus of the alpha chain, which is derived from the carboxyl end of the proenzyme. The autoendoproteolytic cleavage occurs by a canonical serine protease mechanism, in which the side chain hydroxyl group of the serine supplies its oxygen atom to form the C-terminus of the beta chain, while the remainder of the serine residue undergoes an oxidative deamination to produce ammonia and the pyruvoyl prosthetic group on the alpha chain. During this reaction, the Ser that is part of the protease active site of the proenzyme becomes the pyruvoyl prosthetic group, which constitutes an essential element of the active site of the mature decarboxylase.

Its subcellular location is the cell membrane. The catalysed reaction is a 1,2-diacyl-sn-glycero-3-phospho-L-serine + H(+) = a 1,2-diacyl-sn-glycero-3-phosphoethanolamine + CO2. It participates in phospholipid metabolism; phosphatidylethanolamine biosynthesis; phosphatidylethanolamine from CDP-diacylglycerol: step 2/2. Its function is as follows. Catalyzes the formation of phosphatidylethanolamine (PtdEtn) from phosphatidylserine (PtdSer). In Pseudomonas fluorescens (strain SBW25), this protein is Phosphatidylserine decarboxylase proenzyme.